Consider the following 225-residue polypeptide: Peptidyl-tRNA hydrolase (225 aa).

Tyr-14 is a tRNA binding site. His-19 serves as the catalytic Proton acceptor. The tRNA site is built by Phe-64, Asn-66, and Asn-112. Residues 187-225 are disordered; the sequence is MQPPKPEKPKGEAKPAAPEAPEAAPDTRSALQRLADRFR. Residues 200 to 210 show a composition bias toward low complexity; sequence KPAAPEAPEAA.

This sequence belongs to the PTH family. Monomer.

Its subcellular location is the cytoplasm. The catalysed reaction is an N-acyl-L-alpha-aminoacyl-tRNA + H2O = an N-acyl-L-amino acid + a tRNA + H(+). Its function is as follows. Hydrolyzes ribosome-free peptidyl-tRNAs (with 1 or more amino acids incorporated), which drop off the ribosome during protein synthesis, or as a result of ribosome stalling. Catalyzes the release of premature peptidyl moieties from peptidyl-tRNA molecules trapped in stalled 50S ribosomal subunits, and thus maintains levels of free tRNAs and 50S ribosomes. In Cereibacter sphaeroides (strain ATCC 17025 / ATH 2.4.3) (Rhodobacter sphaeroides), this protein is Peptidyl-tRNA hydrolase.